The primary structure comprises 396 residues: MADGTAANSSRRIFLIATEESGDRLGSSLMKVLRRRLDDAVRFEGVGGRSMAREGLVSLFPIEDLSIMGFAAVVKQLPMILRRIRETADAVIAAEPDMLVIIDSPDFTHRVARRVRARRPALPIVDYVSPSVWAWRPGRARAMRRYVDHVLALLPFEPEEYRRLAGPPCTYVGHPLIEQVGMLRPDAQERQRRDAPPPALLVLPGSRRSEIDHHMAVFGETLRTLQLDAGEMDVVLLTMPHLIEKVKAAVASWPLQPRIVVGEQGKQAAFRVARAALTKSGTVTLELALAGVPMVTAYRGGAVEAWIAQRVIRTSSVILANLVIGENVIPEFLQENCTPENLAPALREILTDSPLRRRQLKAFAKLDAIMATGQHSPSERAADIVLETMHASRGPE.

This sequence belongs to the LpxB family.

It catalyses the reaction a lipid X + a UDP-2-N,3-O-bis[(3R)-3-hydroxyacyl]-alpha-D-glucosamine = a lipid A disaccharide + UDP + H(+). It functions in the pathway bacterial outer membrane biogenesis; LPS lipid A biosynthesis. Functionally, condensation of UDP-2,3-diacylglucosamine and 2,3-diacylglucosamine-1-phosphate to form lipid A disaccharide, a precursor of lipid A, a phosphorylated glycolipid that anchors the lipopolysaccharide to the outer membrane of the cell. The chain is Lipid-A-disaccharide synthase from Nitrobacter hamburgensis (strain DSM 10229 / NCIMB 13809 / X14).